Here is a 277-residue protein sequence, read N- to C-terminus: Putative phosphoenolpyruvate synthase regulatory protein (277 aa).

157 to 164 (GVSRCGKT) contacts ADP.

It belongs to the pyruvate, phosphate/water dikinase regulatory protein family. PSRP subfamily.

The enzyme catalyses [pyruvate, water dikinase] + ADP = [pyruvate, water dikinase]-phosphate + AMP + H(+). It catalyses the reaction [pyruvate, water dikinase]-phosphate + phosphate + H(+) = [pyruvate, water dikinase] + diphosphate. In terms of biological role, bifunctional serine/threonine kinase and phosphorylase involved in the regulation of the phosphoenolpyruvate synthase (PEPS) by catalyzing its phosphorylation/dephosphorylation. The polypeptide is Putative phosphoenolpyruvate synthase regulatory protein (Enterobacter sp. (strain 638)).